Reading from the N-terminus, the 65-residue chain is Large ribosomal subunit protein bL35 (65 aa).

This sequence belongs to the bacterial ribosomal protein bL35 family.

This is Large ribosomal subunit protein bL35 from Caldicellulosiruptor bescii (strain ATCC BAA-1888 / DSM 6725 / KCTC 15123 / Z-1320) (Anaerocellum thermophilum).